The primary structure comprises 766 residues: Serine/threonine-protein kinase PLK4 (766 aa).

A Protein kinase domain is found at Tyr-14–Met-267. ATP contacts are provided by residues Leu-20 to Val-28 and Lys-43. The active-site Proton acceptor is Asp-138. A Cryptic POLO box 1 (CPB1) domain is found at Glu-379–Lys-496. One can recognise a Cryptic POLO box 2 (CPB2) domain in the interval Thr-497–Pro-600. The POLO box domain occupies Pro-658–Thr-737.

It belongs to the protein kinase superfamily. Ser/Thr protein kinase family. CDC5/Polo subfamily. As to quaternary structure, homodimer. Post-translationally, ubiquitinated by the SCF(Slimb) ubiquitin ligase complex; leading to its degradation by the proteasome during interphase and regulating centriole number and ensuring the block to centriole reduplication.

The protein resides in the cytoplasm. The protein localises to the cytoskeleton. It localises to the microtubule organizing center. It is found in the centrosome. Its subcellular location is the centriole. The catalysed reaction is L-seryl-[protein] + ATP = O-phospho-L-seryl-[protein] + ADP + H(+). The enzyme catalyses L-threonyl-[protein] + ATP = O-phospho-L-threonyl-[protein] + ADP + H(+). Functionally, serine/threonine-protein kinase that plays a central role in centriole duplication. Able to trigger procentriole formation on the surface of the mother centriole cylinder, using mother centriole as a platform, leading to the recruitment of centriole biogenesis proteins such as sas-6. When overexpressed, it is able to induce centrosome amplification through the simultaneous generation of multiple procentrioles adjoining each parental centriole during S phase. Centrosome amplification following overexpression can initiate tumorigenesis, highlighting the importance of centrosome regulation in cancers. The protein is Serine/threonine-protein kinase PLK4 (SAK) of Drosophila yakuba (Fruit fly).